The following is a 790-amino-acid chain: MSRRRHSYENDGGQPHKRRKTSDANETEDHLESLICKVGEKSACSLESNLEGLAGVLEADLPNYKSKILRLLCTVARLLPEKLTIYTTLVGLLNARNYNFGGEFVEAMIRQLKESLKANNYNEAVYLVRFLSDLVNCHVIAAPSMVAMFENFVSVTQEEDVPQVRRDWYVYAFLSSLPWVGKELYEKKDAEMDRIFSTTESYLKRRQKTHVPMLQVWTADKPHPQEEYLDCLWAQIQKLKKDRWQERHILRPYLAFDSILCEALQHNLPPFTPPPHTEDSVYPMPRVIFRMFDYTDDPEGPVMPGSHSVERFVIEENLHCIIKSYWKERKTCAAQLVSYPGKNKIPLNYHIVEVIFAELFQLPAPPHIDVMYTTLLIELCKLQPGSLPQVLAQATEMLYMRLDTMSTTCVDRFINWFSHHLSNFQFRWSWEDWSDCLTQDLESPKPKFVREVLEKCMRLSYHQHILDIVPPTFSALCPANPTCIYKYGDESSNSLPGHSVALCLSVAFKSKATNDEIFSILKDVPNPNQVDDDDEGFRFNPLKIEVFVQTLLHLAAKSFSHSFSALAKFHEVFKTLAESDKGKLHVLRVMFEVWRNHPQMIAVLVDKMIRTQIVDCAAVANWIFSSELSRDFTRLFVWEILHSTIRKMNKHVLKIQKELEEAKEKLARQHKRRSDDDDRSSDRKDGALEEQIERLQEKVEAAQSEQKNLFLVIFQRFIMILTEHLVRCETDGTSILTPWYKNCIERLQQIFLQHHQTIQQYMVTLENLLFTAELDPHILAVFQQFCALQA.

The tract at residues Met1–Glu26 is disordered. Residues Arg3–Lys20 carry the Nuclear localization signal motif. At Ser7 the chain carries Phosphoserine. Position 21 is a phosphothreonine (Thr21). A phosphoserine mark is found at Ser22 and Ser201. Positions Glu28–Lys240 constitute an MIF4G domain. Lys204 bears the N6-acetyllysine mark. The stretch at Ser643–Ile713 forms a coiled coil. Positions Leu666–Asp685 are disordered. A Glycyl lysine isopeptide (Lys-Gly) (interchain with G-Cter in SUMO2) cross-link involves residue Lys684. At Lys698 the chain carries N6-acetyllysine.

Belongs to the NCBP1 family. Component of the nuclear cap-binding complex (CBC), a heterodimer composed of NCBP1/CBP80 and NCBP2/CBP20 that interacts with m7GpppG-capped RNA. Found in a U snRNA export complex containing PHAX/RNUXA, NCBP1/CBP80, NCBP2/CBP20, RAN, XPO1 and m7G-capped RNA. Identified in a IGF2BP1-dependent mRNP granule complex containing untranslated mRNAs. Interacts with PHAX/RNUXA, SRRT/ARS2, EIF4G2, IGF2BP1, HNRNPF, HNRNPH1, KIAA0427/CTIF, PARN, DROSHA, UPF1 and ALYREF/THOC4. May interact with EIF4G1; the interaction is however controversial. The large PER complex involved in the repression of transcriptional termination is composed of at least PER2, CDK9, DDX5, DHX9, NCBP1/CBP80 and POLR2A (active). Component of an alternative nuclear cap-binding complex (CBC) composed of NCBP1/CBP80 and NCBP3. Interacts with METTL3. Interacts with ZFC3H1 in a RNase-insensitive manner. Interacts with MTREX. Interacts with TASOR. Interacts with DHX34; the interaction is RNA-dependent. Interacts with KPNA3. Post-translationally, dephosphorylated at Thr-21 by the PNUTS-PP1 complex during RNA polymerase II transcription pause-release. As to expression, expressed in the spermatogonia, spermatocytes and granular cells within the cerebellum.

It is found in the nucleus. Its subcellular location is the cytoplasm. Component of the cap-binding complex (CBC), which binds cotranscriptionally to the 5'-cap of pre-mRNAs and is involved in various processes such as pre-mRNA splicing, translation regulation, nonsense-mediated mRNA decay, RNA-mediated gene silencing (RNAi) by microRNAs (miRNAs) and mRNA export. The CBC complex is involved in mRNA export from the nucleus via its interaction with ALYREF/THOC4/ALY, leading to the recruitment of the mRNA export machinery to the 5'-end of mRNA and to mRNA export in a 5' to 3' direction through the nuclear pore. The CBC complex is also involved in mediating U snRNA and intronless mRNAs export from the nucleus. The CBC complex is essential for a pioneer round of mRNA translation, before steady state translation when the CBC complex is replaced by cytoplasmic cap-binding protein eIF4E. The pioneer round of mRNA translation mediated by the CBC complex plays a central role in nonsense-mediated mRNA decay (NMD), NMD only taking place in mRNAs bound to the CBC complex, but not on eIF4E-bound mRNAs. The CBC complex enhances NMD in mRNAs containing at least one exon-junction complex (EJC) via its interaction with UPF1, promoting the interaction between UPF1 and UPF2. The CBC complex is also involved in 'failsafe' NMD, which is independent of the EJC complex, while it does not participate in Staufen-mediated mRNA decay (SMD). During cell proliferation, the CBC complex is also involved in microRNAs (miRNAs) biogenesis via its interaction with SRRT/ARS2 and is required for miRNA-mediated RNA interference. The CBC complex also acts as a negative regulator of PARN, thereby acting as an inhibitor of mRNA deadenylation. In the CBC complex, NCBP1/CBP80 does not bind directly capped RNAs (m7GpppG-capped RNA) but is required to stabilize the movement of the N-terminal loop of NCBP2/CBP20 and lock the CBC into a high affinity cap-binding state with the cap structure. Associates with NCBP3 to form an alternative cap-binding complex (CBC) which plays a key role in mRNA export and is particularly important in cellular stress situations such as virus infections. The conventional CBC with NCBP2 binds both small nuclear RNA (snRNA) and messenger (mRNA) and is involved in their export from the nucleus whereas the alternative CBC with NCBP3 does not bind snRNA and associates only with mRNA thereby playing a role only in mRNA export. NCBP1/CBP80 is required for cell growth and viability. The protein is Nuclear cap-binding protein subunit 1 (Ncbp1) of Mus musculus (Mouse).